The chain runs to 383 residues: 3-phytase (383 aa).

The signal sequence occupies residues 1–26; it reads MNHSKTLLLTAAAGLMLTCGAVSSQA. The propeptide occupies 27–30; that stretch reads KHKL. Residues 31–362 form the BPP domain; it reads SDPYHFTVNA…VPWERIADKI (332 aa). The disordered stretch occupies residues 364-383; the sequence is FHPQVNKQVDPRKMTDRSGK. Basic and acidic residues predominate over residues 372–383; it reads VDPRKMTDRSGK.

It is found in the secreted. The catalysed reaction is 1D-myo-inositol hexakisphosphate + H2O = 1D-myo-inositol 1,2,4,5,6-pentakisphosphate + phosphate. The sequence is that of 3-phytase (phy) from Bacillus sp. (strain DS11).